Reading from the N-terminus, the 386-residue chain is Phosphoglycerate kinase (386 aa).

Substrate contacts are provided by residues 21 to 23 (DLN), arginine 36, 59 to 62 (HLGR), arginine 112, and arginine 145. Residues lysine 196, glutamate 313, and 339-342 (GGDT) each bind ATP.

It belongs to the phosphoglycerate kinase family. Monomer.

Its subcellular location is the cytoplasm. The enzyme catalyses (2R)-3-phosphoglycerate + ATP = (2R)-3-phospho-glyceroyl phosphate + ADP. Its pathway is carbohydrate degradation; glycolysis; pyruvate from D-glyceraldehyde 3-phosphate: step 2/5. The sequence is that of Phosphoglycerate kinase from Haemophilus influenzae (strain 86-028NP).